A 32-amino-acid polypeptide reads, in one-letter code: U3-cyrtautoxin-As1a (32 aa).

3 disulfides stabilise this stretch: Cys4–Cys19, Cys11–Cys24, and Cys18–Cys29.

Belongs to the neurotoxin 14 (magi-1) family. The protein to aptotoxin III. As to expression, expressed by the venom gland.

It localises to the secreted. Functionally, is both paralytic and lethal, when injected into lepidopteran larvae. Is a slower acting toxin, being lethal at 24 hours, but not paralytic at 1 hour post-injection. The sequence is that of U3-cyrtautoxin-As1a from Apomastus schlingeri (Trap-door spider).